An 887-amino-acid polypeptide reads, in one-letter code: Exocyst complex component SEC3A (887 aa).

Coiled-coil stretches lie at residues Ile221–Glu248 and Leu281–Gln301. The segment at Gly542–Leu581 is disordered. Residues Asp555 to Glu569 show a composition bias toward acidic residues.

The protein belongs to the SEC3 family. The exocyst complex is composed of SEC3, SEC5, SEC6, SEC8, SEC10, EXO70A1 and EXO84B. Interacts with EXO70A1, SEC5A and ICR1, but not with ICR2. Binds to EXO70H1. Binds directly to B1L. Widely expressed. Preferentially expressed in tissues containing dividing and expanding cells, such as the shoot apical meristem, root tip, lateral root primordia and developing embryos.

The protein resides in the cytoplasm. It localises to the cytosol. Its subcellular location is the cell membrane. It is found in the cytoskeleton. The protein localises to the phragmoplast. The protein resides in the secreted. It localises to the extracellular exosome. Functionally, component of the exocyst complex involved in the docking of exocytic vesicles with fusion sites on the plasma membrane during regulated or polarized secretion. Involved in polarized cell growth and organ morphogenesis. During cytokinesis, involved in cell plate initiation, cell plate maturation and formation of new primary cell wall. During cytokinesis, involved in cell plate initiation, cell plate maturation and formation of new primary cell wall. The protein is Exocyst complex component SEC3A of Arabidopsis thaliana (Mouse-ear cress).